The following is a 296-amino-acid chain: Diguanylate cyclase DgcS (296 aa).

Residues Gly165 to Thr293 form the GGDEF domain. Positions 173, 174, and 216 each coordinate Mg(2+). Asp216 is an active-site residue.

Mg(2+) is required as a cofactor.

It catalyses the reaction 2 GTP = 3',3'-c-di-GMP + 2 diphosphate. Its function is as follows. Catalyzes the synthesis of cyclic-di-GMP (c-di-GMP) via the condensation of 2 GTP molecules. May be involved in the regulation of formation of solid surface-associated biofilms and pellicles according to environmental conditions. The protein is Diguanylate cyclase DgcS of Shewanella oneidensis (strain ATCC 700550 / JCM 31522 / CIP 106686 / LMG 19005 / NCIMB 14063 / MR-1).